Reading from the N-terminus, the 376-residue chain is Polycomb group protein FIE1 (376 aa).

WD repeat units follow at residues 85 to 127 (DKDE…LLKT), 130 to 170 (GHGD…CILI), 176 to 216 (GHRN…PYVE), 242 to 279 (VHSNYVDCTRWLGDFILSKSVDNEIVLWEPKTKEQSPG), 291 to 332 (VPEC…PVLT), and 339 to 376 (QCKSAIRQTAVSFDGSTILACSEDGSIWRWDEVDHPKA).

This sequence belongs to the WD repeat ESC family. Interacts with EZ1. Component of the polycomb repressive complex 2 (PRC2), composed of the core PRC2 components EMF2B, EZ1 and CLF. PRC2 methylates 'Lys-27' residues of histone H3 (H3K27me3), leading to transcriptional repression of the affected target gene. Widely expressed.

In terms of biological role, polycomb group (PcG) protein. PcG proteins act by forming multiprotein complexes, which are required to maintain the transcriptionally repressive state of homeotic genes throughout development. PcG proteins are not required to initiate repression, but to maintain it during later stages of development. They act via the methylation of histones, rendering chromatin heritably changed in its expressibility. Involved in the regulation of seed endosperm development, grain filling and seed dormancy. FIE2-containing PcG complex in seed endosperm regulates the expression of various transcription factors by trimethylation on histone H3 'Lys-27' (H3K27me3) of target genes. Involved in the overall expression regulation of a large number of nutrient metabolism genes. Involved in the regulation of seed endosperm development. Involved in the regulation of vegetative development, particularly in stem cell maintenance in the root system, where it maintains the suppression of key differentiation regulators. The chain is Polycomb group protein FIE1 from Oryza sativa subsp. japonica (Rice).